The chain runs to 738 residues: Prolyl oligopeptidase A (738 aa).

Active-site charge relay system residues include Ser-581, Asp-665, and His-701.

Belongs to the peptidase S9A family. As to quaternary structure, monomer.

The enzyme catalyses Hydrolysis of Pro-|-Xaa &gt;&gt; Ala-|-Xaa in oligopeptides.. In terms of biological role, housekeeping prolyl oligopeptidase (POP) that behaves like a conventional POP by cleaving peptide bonds on the C-terminal side of prolyl residues within peptides that are up to approximately 30 amino acids long. In Galerina marginata (strain CBS 339.88), this protein is Prolyl oligopeptidase A.